A 250-amino-acid polypeptide reads, in one-letter code: 2,3-bisphosphoglycerate-dependent phosphoglycerate mutase (250 aa).

Substrate-binding positions include 8 to 15 (RHGQSAWN), 21 to 22 (TG), Arg60, 87 to 90 (ERHY), Lys98, 114 to 115 (RR), and 183 to 184 (GN). Catalysis depends on His9, which acts as the Tele-phosphohistidine intermediate. The Proton donor/acceptor role is filled by Glu87.

Belongs to the phosphoglycerate mutase family. BPG-dependent PGAM subfamily. Homodimer.

It catalyses the reaction (2R)-2-phosphoglycerate = (2R)-3-phosphoglycerate. Its pathway is carbohydrate degradation; glycolysis; pyruvate from D-glyceraldehyde 3-phosphate: step 3/5. Its function is as follows. Catalyzes the interconversion of 2-phosphoglycerate and 3-phosphoglycerate. The chain is 2,3-bisphosphoglycerate-dependent phosphoglycerate mutase from Nitratidesulfovibrio vulgaris (strain DP4) (Desulfovibrio vulgaris).